The sequence spans 386 residues: DNA-directed RNA polymerase subunit Rpo1C (386 aa).

It belongs to the RNA polymerase beta' chain family. As to quaternary structure, part of the RNA polymerase complex.

The protein localises to the cytoplasm. The enzyme catalyses RNA(n) + a ribonucleoside 5'-triphosphate = RNA(n+1) + diphosphate. Functionally, DNA-dependent RNA polymerase (RNAP) catalyzes the transcription of DNA into RNA using the four ribonucleoside triphosphates as substrates. Forms part of the jaw domain. The protein is DNA-directed RNA polymerase subunit Rpo1C of Methanococcus vannielii (strain ATCC 35089 / DSM 1224 / JCM 13029 / OCM 148 / SB).